The following is a 481-amino-acid chain: Sterol 14-alpha demethylase (481 aa).

A helical membrane pass occupies residues 1–21 (MFIEAIVLALTALILYSVYSV). Residue C422 participates in heme binding.

Belongs to the cytochrome P450 family. Heme serves as cofactor.

The protein localises to the membrane. It carries out the reaction a 14alpha-methyl steroid + 3 reduced [NADPH--hemoprotein reductase] + 3 O2 = a Delta(14) steroid + formate + 3 oxidized [NADPH--hemoprotein reductase] + 4 H2O + 4 H(+). Its pathway is steroid biosynthesis; zymosterol biosynthesis; zymosterol from lanosterol: step 1/6. Its function is as follows. Catalyzes C14-demethylation of lanosterol which is critical for ergosterol biosynthesis. It transforms lanosterol into 4,4'-dimethyl cholesta-8,14,24-triene-3-beta-ol. Favors C4 dimethylated substrates, the substrate preference order is 24-methylenedihydrolanosterol &gt; 24,25-dihydrolanosterol &gt; lanosterol &gt; obtusifoliol &gt; norlanosterol. In Trypanosoma cruzi (strain CL Brener), this protein is Sterol 14-alpha demethylase.